The chain runs to 141 residues: ATP synthase epsilon chain (141 aa).

It belongs to the ATPase epsilon chain family. In terms of assembly, F-type ATPases have 2 components, CF(1) - the catalytic core - and CF(0) - the membrane proton channel. CF(1) has five subunits: alpha(3), beta(3), gamma(1), delta(1), epsilon(1). CF(0) has three main subunits: a, b and c.

The protein resides in the cell inner membrane. In terms of biological role, produces ATP from ADP in the presence of a proton gradient across the membrane. This is ATP synthase epsilon chain from Burkholderia multivorans (strain ATCC 17616 / 249).